Here is a 546-residue protein sequence, read N- to C-terminus: Chaperonin GroEL (546 aa).

Residues 30–33 (TLGP), Lys51, 87–91 (DGTTT), Gly415, and Asp495 each bind ATP.

It belongs to the chaperonin (HSP60) family. Forms a cylinder of 14 subunits composed of two heptameric rings stacked back-to-back. Interacts with the co-chaperonin GroES.

The protein resides in the cytoplasm. It catalyses the reaction ATP + H2O + a folded polypeptide = ADP + phosphate + an unfolded polypeptide.. Together with its co-chaperonin GroES, plays an essential role in assisting protein folding. The GroEL-GroES system forms a nano-cage that allows encapsulation of the non-native substrate proteins and provides a physical environment optimized to promote and accelerate protein folding. The polypeptide is Chaperonin GroEL (Brucella suis (strain ATCC 23445 / NCTC 10510)).